The chain runs to 296 residues: MIIHPNFDPVAIHLGPLAVRWYGLMYLVGFIAAIVVGRIRLKLPYVAAQGWTAKDIDDMMFYGVLGTVLGGRLGYVLFYKADFYFSHPLDVFKVWEGGMSFHGGFLGVTLAMMLFAWQRKRHWLQVTDFVAPMVPLGLAAGRLGNFINGELWGRVTDPTAPWAMLFPGAMRDDAAWLPKHPELVEKWHLADVFMQYQMLPRHPSQLYEIALEGIALFFVLFLFARKPRPMGAISALFLIGYGLARFTVEFAREPDDFLGLLALGLSMGQWLSLPMILAGIAMMVWAYRRRAANAAA.

Helical transmembrane passes span 17 to 37 (LAVR…IVVG), 59 to 79 (MMFY…VLFY), 97 to 117 (GGMS…LFAW), 129 to 149 (FVAP…FING), 204 to 224 (SQLY…FLFA), 230 to 250 (MGAI…TVEF), and 257 to 277 (FLGL…PMIL). Residue Arg-142 coordinates a 1,2-diacyl-sn-glycero-3-phospho-(1'-sn-glycerol).

It belongs to the Lgt family.

Its subcellular location is the cell inner membrane. It catalyses the reaction L-cysteinyl-[prolipoprotein] + a 1,2-diacyl-sn-glycero-3-phospho-(1'-sn-glycerol) = an S-1,2-diacyl-sn-glyceryl-L-cysteinyl-[prolipoprotein] + sn-glycerol 1-phosphate + H(+). The protein operates within protein modification; lipoprotein biosynthesis (diacylglyceryl transfer). Catalyzes the transfer of the diacylglyceryl group from phosphatidylglycerol to the sulfhydryl group of the N-terminal cysteine of a prolipoprotein, the first step in the formation of mature lipoproteins. This is Phosphatidylglycerol--prolipoprotein diacylglyceryl transferase from Burkholderia cenocepacia (strain HI2424).